Reading from the N-terminus, the 163-residue chain is Adenosine 5'-monophosphoramidase HINT2 (163 aa).

The N-terminal 17 residues, 1-17 (MAAAVVLAAGLCVARRA), are a transit peptide targeting the mitochondrion. Residues 55–163 (IFSRILDRSL…GGRQLQWPPG (109 aa)) enclose the HIT domain. AMP contacts are provided by S63 and D80. K119 is subject to N6-acetyllysine. An AMP-binding site is contributed by N136. Position 139 is an N6-acetyllysine (K139). Residues 142-145 (AQSV) and 149-151 (HIH) contribute to the AMP site. Positions 147–151 (HLHIH) match the Histidine triad motif motif. Catalysis depends on H149, which acts as the Tele-AMP-histidine intermediate.

Belongs to the HINT family.

The protein localises to the mitochondrion. The catalysed reaction is adenosine 5'-phosphoramidate + H2O = AMP + NH4(+). Functionally, exhibits adenosine 5'-monophosphoramidase activity, hydrolyzing purine nucleotide phosphoramidates with a single phosphate group such as adenosine 5'monophosphoramidate (AMP-NH2) to yield AMP and NH2. Hydrolyzes adenosine 5'-O-p-nitrophenylphosphoramidate (AMP-pNA). May be involved in steroid biosynthesis. May play a role in apoptosis. The chain is Adenosine 5'-monophosphoramidase HINT2 from Bos taurus (Bovine).